The sequence spans 337 residues: GTP 3',8-cyclase (337 aa).

The 226-residue stretch at 1–226 folds into the Radical SAM core domain; the sequence is MNRVDYLRIS…REKIRQKWGL (226 aa). R8 serves as a coordination point for GTP. [4Fe-4S] cluster-binding residues include C15 and C19. Y21 serves as a coordination point for S-adenosyl-L-methionine. C22 is a binding site for [4Fe-4S] cluster. R60 provides a ligand contact to GTP. G64 contributes to the S-adenosyl-L-methionine binding site. Residue T91 coordinates GTP. S115 is an S-adenosyl-L-methionine binding site. K155 contacts GTP. M189 contributes to the S-adenosyl-L-methionine binding site. [4Fe-4S] cluster-binding residues include C260 and C263. A GTP-binding site is contributed by 265 to 267; it reads RMR. C277 contacts [4Fe-4S] cluster.

The protein belongs to the radical SAM superfamily. MoaA family. As to quaternary structure, monomer and homodimer. It depends on [4Fe-4S] cluster as a cofactor.

The enzyme catalyses GTP + AH2 + S-adenosyl-L-methionine = (8S)-3',8-cyclo-7,8-dihydroguanosine 5'-triphosphate + 5'-deoxyadenosine + L-methionine + A + H(+). It functions in the pathway cofactor biosynthesis; molybdopterin biosynthesis. In terms of biological role, catalyzes the cyclization of GTP to (8S)-3',8-cyclo-7,8-dihydroguanosine 5'-triphosphate. The sequence is that of GTP 3',8-cyclase from Crocosphaera subtropica (strain ATCC 51142 / BH68) (Cyanothece sp. (strain ATCC 51142)).